A 508-amino-acid chain; its full sequence is WD repeat-containing protein DDB_G0290555 (508 aa).

WD repeat units lie at residues 32–74 (TSEL…LIGE), 159–198 (NVAT…KTYS), 252–292 (FSKH…QVGS), and 295–334 (DSAG…MLHK). The tract at residues 368 to 508 (ENKNRINNDD…KKFAGLKKRK (141 aa)) is disordered. Over residues 399 to 435 (MDSDDDIEDGDDNDVEFPMEADSDDSDFDLGNSDDDN) the composition is skewed to acidic residues. A compositionally biased stretch (basic and acidic residues) spans 436-446 (ISVKKENKGDS). Acidic residues predominate over residues 447-456 (DDSDDDSDED). The segment covering 471–493 (NNNNNNNKGKNNKGKNNSSTKKT) has biased composition (low complexity). Residues 497–508 (LKKKFAGLKKRK) are compositionally biased toward basic residues.

This is WD repeat-containing protein DDB_G0290555 from Dictyostelium discoideum (Social amoeba).